The sequence spans 443 residues: 3-ketoacyl-CoA thiolase 1, peroxisomal (443 aa).

The N-terminal 30 residues, 1 to 30 (MEKATERQRILLRHLQPSSSSDASLSASAC), are a transit peptide targeting the peroxisome. Cys-130 acts as the Acyl-thioester intermediate in catalysis. Residues His-385 and Cys-417 each act as proton acceptor in the active site.

This sequence belongs to the thiolase-like superfamily. Thiolase family. In terms of assembly, homodimer. Low levels in seedlings and leaves.

Its subcellular location is the peroxisome. It catalyses the reaction an acyl-CoA + acetyl-CoA = a 3-oxoacyl-CoA + CoA. Its pathway is lipid metabolism; fatty acid metabolism. Its function is as follows. Involved in fatty-acid beta-oxidation prior to gluconeogenesis during germination and subsequent seedling growth. Implicated in jasmonic acid (JA) biosynthesis. The sequence is that of 3-ketoacyl-CoA thiolase 1, peroxisomal (KAT1) from Arabidopsis thaliana (Mouse-ear cress).